Reading from the N-terminus, the 359-residue chain is Histidinol-phosphate aminotransferase (359 aa).

Lys217 is modified (N6-(pyridoxal phosphate)lysine).

It belongs to the class-II pyridoxal-phosphate-dependent aminotransferase family. Histidinol-phosphate aminotransferase subfamily. Homodimer. Requires pyridoxal 5'-phosphate as cofactor.

It catalyses the reaction L-histidinol phosphate + 2-oxoglutarate = 3-(imidazol-4-yl)-2-oxopropyl phosphate + L-glutamate. It participates in amino-acid biosynthesis; L-histidine biosynthesis; L-histidine from 5-phospho-alpha-D-ribose 1-diphosphate: step 7/9. In Salmonella choleraesuis (strain SC-B67), this protein is Histidinol-phosphate aminotransferase.